The following is a 111-amino-acid chain: Ribonuclease P protein component (111 aa).

Belongs to the RnpA family. Consists of a catalytic RNA component (M1 or rnpB) and a protein subunit.

It carries out the reaction Endonucleolytic cleavage of RNA, removing 5'-extranucleotides from tRNA precursor.. RNaseP catalyzes the removal of the 5'-leader sequence from pre-tRNA to produce the mature 5'-terminus. It can also cleave other RNA substrates such as 4.5S RNA. The protein component plays an auxiliary but essential role in vivo by binding to the 5'-leader sequence and broadening the substrate specificity of the ribozyme. The protein is Ribonuclease P protein component of Mycoplasmopsis pulmonis (strain UAB CTIP) (Mycoplasma pulmonis).